The primary structure comprises 361 residues: Large ribosomal subunit protein mL45 (361 aa).

A disordered region spans residues 319–361 (EPPKELSAGDAEVKQVDSVGEQSKEQLPLATPVESHTKPSLAI).

Belongs to the mitochondrion-specific ribosomal protein mL45 family.

The protein localises to the mitochondrion. This chain is Large ribosomal subunit protein mL45 (mRpL45), found in Drosophila melanogaster (Fruit fly).